A 430-amino-acid polypeptide reads, in one-letter code: Asparagine--tRNA ligase (430 aa).

It belongs to the class-II aminoacyl-tRNA synthetase family. As to quaternary structure, homodimer.

The protein resides in the cytoplasm. It carries out the reaction tRNA(Asn) + L-asparagine + ATP = L-asparaginyl-tRNA(Asn) + AMP + diphosphate + H(+). In Listeria innocua serovar 6a (strain ATCC BAA-680 / CLIP 11262), this protein is Asparagine--tRNA ligase.